The following is a 388-amino-acid chain: 5-hydroxytryptamine receptor 1B (388 aa).

The tract at residues 1 to 29 (MEQPSRLCSPPASGSLTSSQTNHSTFPNP) is disordered. Over 1–45 (MEQPSRLCSPPASGSLTSSQTNHSTFPNPNCSAPDLEPYQDSIAL) the chain is Extracellular. Polar residues predominate over residues 12–29 (ASGSLTSSQTNHSTFPNP). N-linked (GlcNAc...) asparagine glycans are attached at residues asparagine 22 and asparagine 30. Residues 46 to 71 (PWKVLLATFLGLITLGTTLSNAFVIA) form a helical membrane-spanning segment. Residues 72-85 (TVSRTRKLHTPANY) are Cytoplasmic-facing. A helical membrane pass occupies residues 86–110 (LIASLAVTDLLVSILVMPISTMYTV). At 111-118 (TGRWTLGQ) the chain is on the extracellular side. Residues 119 to 144 (VVCDFWLSSDITCCTASILHLCVIAL) form a helical membrane-spanning segment. Cysteine 121 and cysteine 197 form a disulfide bridge. Ergotamine contacts are provided by aspartate 128 and threonine 133. A DRY motif; important for ligand-induced conformation changes and signaling motif is present at residues 145 to 147 (DRY). The Cytoplasmic segment spans residues 145-164 (DRYWAITDAVEYSAKRTPKR). The chain crosses the membrane as a helical span at residues 165 to 183 (AAGMIIMVWVFSVSISMPP). At 184-203 (LFWRQAKAEEVADCSVNTDH) the chain is on the extracellular side. Valine 199 is an ergotamine binding site. The helical transmembrane segment at 204–227 (ILYTVYSTVGAFYFPTLLLIALYG) threads the bilayer. Residues 228-313 (RIYVEARSRI…AARERKATRT (86 aa)) are Cytoplasmic-facing. The tract at residues 249–282 (LTRAQLITDSPGSSSSGTSINSRAPEGPSESGSP) is disordered. Low complexity predominate over residues 255–270 (ITDSPGSSSSGTSINS). A helical transmembrane segment spans residues 314–335 (LGIILGAFIVCWLPFFIISLAL). The Extracellular segment spans residues 336 to 345 (PICDDACWFH). Residues 346–368 (LAIFDFFNWLGYLNSLINPIIYT) traverse the membrane as a helical segment. Positions 363–367 (NPIIY) match the NPxxY motif; important for ligand-induced conformation changes and signaling motif. Over 369 to 388 (KSNDDFKQAFQKLMRFRRTS) the chain is Cytoplasmic.

The protein belongs to the G-protein coupled receptor 1 family. As to quaternary structure, homodimer. Heterodimer with HTR1D. Phosphorylated. Desensitization of the receptor may be mediated by its phosphorylation. In terms of processing, palmitoylated.

The protein localises to the cell membrane. Its function is as follows. G-protein coupled receptor for 5-hydroxytryptamine (serotonin). Also functions as a receptor for ergot alkaloid derivatives, various anxiolytic and antidepressant drugs and other psychoactive substances, such as lysergic acid diethylamide (LSD). Ligand binding causes a conformation change that triggers signaling via guanine nucleotide-binding proteins (G proteins) and modulates the activity of downstream effectors, such as adenylate cyclase. HTR1B is coupled to G(i)/G(o) G alpha proteins and mediates inhibitory neurotransmission by inhibiting adenylate cyclase activity. Arrestin family members inhibit signaling via G proteins and mediate activation of alternative signaling pathways. Regulates the release of 5-hydroxytryptamine, dopamine and acetylcholine in the brain, and thereby affects neural activity, nociceptive processing, pain perception, mood and behavior. Besides, plays a role in vasoconstriction of cerebral arteries. This is 5-hydroxytryptamine receptor 1B (HTR1B) from Didelphis virginiana (North American opossum).